The chain runs to 130 residues: Small ribosomal subunit protein uS8 (130 aa).

It belongs to the universal ribosomal protein uS8 family. In terms of assembly, part of the 30S ribosomal subunit.

Functionally, one of the primary rRNA binding proteins, it binds directly to 16S rRNA central domain where it helps coordinate assembly of the platform of the 30S subunit. The protein is Small ribosomal subunit protein uS8 of Methanocorpusculum labreanum (strain ATCC 43576 / DSM 4855 / Z).